Consider the following 82-residue polypeptide: Small ribosomal subunit protein uS17 (82 aa).

It belongs to the universal ribosomal protein uS17 family. As to quaternary structure, part of the 30S ribosomal subunit.

One of the primary rRNA binding proteins, it binds specifically to the 5'-end of 16S ribosomal RNA. The chain is Small ribosomal subunit protein uS17 from Shewanella pealeana (strain ATCC 700345 / ANG-SQ1).